A 241-amino-acid polypeptide reads, in one-letter code: Sugar fermentation stimulation protein homolog (241 aa).

Belongs to the SfsA family.

The polypeptide is Sugar fermentation stimulation protein homolog (Thermosynechococcus vestitus (strain NIES-2133 / IAM M-273 / BP-1)).